Here is a 211-residue protein sequence, read N- to C-terminus: Ribonuclease HII (211 aa).

One can recognise an RNase H type-2 domain in the interval 17–211; sequence FLSAGVDEVG…CQPSLFEVRS (195 aa). Residues Asp-23, Glu-24, and Asp-119 each coordinate a divalent metal cation.

The protein belongs to the RNase HII family. It depends on Mn(2+) as a cofactor. The cofactor is Mg(2+).

Its subcellular location is the cytoplasm. It carries out the reaction Endonucleolytic cleavage to 5'-phosphomonoester.. In terms of biological role, endonuclease that specifically degrades the RNA of RNA-DNA hybrids. The chain is Ribonuclease HII from Trichodesmium erythraeum (strain IMS101).